The sequence spans 537 residues: CTP synthase (537 aa).

Residues 1-267 (MTKYIFVTGG…DQIVCDHLKL (267 aa)) are amidoligase domain. Ser-13 lines the CTP pocket. Ser-13 lines the UTP pocket. 14 to 19 (SIGKGI) is an ATP binding site. Tyr-54 is a binding site for L-glutamine. Residue Asp-71 participates in ATP binding. The Mg(2+) site is built by Asp-71 and Glu-141. CTP-binding positions include 148–150 (DIE), 188–193 (KTKPTQ), and Lys-224. UTP is bound by residues 188-193 (KTKPTQ) and Lys-224. ATP is bound at residue 240 to 242 (RDV). The region spanning 292–535 (RIALVGKYVE…VTAAVKNKNQ (244 aa)) is the Glutamine amidotransferase type-1 domain. Gly-354 contacts L-glutamine. The active-site Nucleophile; for glutamine hydrolysis is the Cys-381. L-glutamine is bound by residues 382–385 (LGMQ), Glu-405, and Arg-463. Catalysis depends on residues His-508 and Glu-510.

This sequence belongs to the CTP synthase family. In terms of assembly, homotetramer.

It carries out the reaction UTP + L-glutamine + ATP + H2O = CTP + L-glutamate + ADP + phosphate + 2 H(+). The catalysed reaction is L-glutamine + H2O = L-glutamate + NH4(+). The enzyme catalyses UTP + NH4(+) + ATP = CTP + ADP + phosphate + 2 H(+). It participates in pyrimidine metabolism; CTP biosynthesis via de novo pathway; CTP from UDP: step 2/2. Allosterically activated by GTP, when glutamine is the substrate; GTP has no effect on the reaction when ammonia is the substrate. The allosteric effector GTP functions by stabilizing the protein conformation that binds the tetrahedral intermediate(s) formed during glutamine hydrolysis. Inhibited by the product CTP, via allosteric rather than competitive inhibition. Catalyzes the ATP-dependent amination of UTP to CTP with either L-glutamine or ammonia as the source of nitrogen. Regulates intracellular CTP levels through interactions with the four ribonucleotide triphosphates. The sequence is that of CTP synthase from Streptococcus equi subsp. equi (strain 4047).